The primary structure comprises 440 residues: Enolase 1 (440 aa).

His161 and Glu170 together coordinate substrate. Glu213 serves as the catalytic Proton donor. The Mg(2+) site is built by Asp248, Glu297, and Asp324. Positions 297 and 324 each coordinate substrate. Residue Lys349 is the Proton acceptor of the active site. Residues 376–379 and Lys400 each bind substrate; that span reads SHRS.

This sequence belongs to the enolase family. Homodimer. It depends on Mg(2+) as a cofactor.

The protein localises to the cytoplasm. The catalysed reaction is (2R)-2-phosphoglycerate = phosphoenolpyruvate + H2O. It participates in carbohydrate degradation; glycolysis; pyruvate from D-glyceraldehyde 3-phosphate: step 4/5. The polypeptide is Enolase 1 (ENO1) (Candida albicans (strain SC5314 / ATCC MYA-2876) (Yeast)).